Here is a 177-residue protein sequence, read N- to C-terminus: Large ribosomal subunit protein uL10 (177 aa).

Belongs to the universal ribosomal protein uL10 family. As to quaternary structure, part of the ribosomal stalk of the 50S ribosomal subunit. The N-terminus interacts with L11 and the large rRNA to form the base of the stalk. The C-terminus forms an elongated spine to which L12 dimers bind in a sequential fashion forming a multimeric L10(L12)X complex.

Forms part of the ribosomal stalk, playing a central role in the interaction of the ribosome with GTP-bound translation factors. The protein is Large ribosomal subunit protein uL10 of Xanthomonas oryzae pv. oryzae (strain MAFF 311018).